A 404-amino-acid polypeptide reads, in one-letter code: Probable protein phosphatase 2C 30 (404 aa).

Residues 42–52 (AERGAEEETSG) are compositionally biased toward basic and acidic residues. The segment at 42–72 (AERGAEEETSGKRRRLDGGGGEASTDEEDRE) is disordered. Residues 77–399 (RYGFTSVCGR…DNVSVVVVNL (323 aa)) form the PPM-type phosphatase domain. Residues D111, G112, and D298 each coordinate Mn(2+). The disordered stretch occupies residues 321–369 (GRRERNRSSPTSNLSPRQSSSSGDEAPNDGAPSAAAGSESDEESAAEED). Over residues 330-343 (PTSNLSPRQSSSSG) the composition is skewed to polar residues. D390 is a Mn(2+) binding site.

It belongs to the PP2C family. As to quaternary structure, interacts with PYL5 and SAPK2. Binding to PYL5 is dependent on the presence of abscisic acid (ABA). Interacts with PYL3, PYL5 and PYL9. Binding to PYL5 and PYL9 is dependent on the presence of ABA. Mg(2+) serves as cofactor. The cofactor is Mn(2+).

The protein resides in the nucleus. It catalyses the reaction O-phospho-L-seryl-[protein] + H2O = L-seryl-[protein] + phosphate. The catalysed reaction is O-phospho-L-threonyl-[protein] + H2O = L-threonyl-[protein] + phosphate. In terms of biological role, together with ABI5, PYL5 and SAPK2, is part of an abscisic acid (ABA) signaling unit that modulates seed germination and early seedling growth. The polypeptide is Probable protein phosphatase 2C 30 (Oryza sativa subsp. japonica (Rice)).